We begin with the raw amino-acid sequence, 875 residues long: Alanine--tRNA ligase (875 aa).

Zn(2+) contacts are provided by H564, H568, C666, and H670.

The protein belongs to the class-II aminoacyl-tRNA synthetase family. Zn(2+) is required as a cofactor.

Its subcellular location is the cytoplasm. The enzyme catalyses tRNA(Ala) + L-alanine + ATP = L-alanyl-tRNA(Ala) + AMP + diphosphate. Functionally, catalyzes the attachment of alanine to tRNA(Ala) in a two-step reaction: alanine is first activated by ATP to form Ala-AMP and then transferred to the acceptor end of tRNA(Ala). Also edits incorrectly charged Ser-tRNA(Ala) and Gly-tRNA(Ala) via its editing domain. The chain is Alanine--tRNA ligase from Mannheimia succiniciproducens (strain KCTC 0769BP / MBEL55E).